A 286-amino-acid polypeptide reads, in one-letter code: ATP synthase gamma chain (286 aa).

It belongs to the ATPase gamma chain family. F-type ATPases have 2 components, CF(1) - the catalytic core - and CF(0) - the membrane proton channel. CF(1) has five subunits: alpha(3), beta(3), gamma(1), delta(1), epsilon(1). CF(0) has three main subunits: a, b and c.

Its subcellular location is the cell inner membrane. Its function is as follows. Produces ATP from ADP in the presence of a proton gradient across the membrane. The gamma chain is believed to be important in regulating ATPase activity and the flow of protons through the CF(0) complex. The chain is ATP synthase gamma chain from Alcanivorax borkumensis (strain ATCC 700651 / DSM 11573 / NCIMB 13689 / SK2).